The chain runs to 246 residues: NAD-dependent protein deacylase (246 aa).

One can recognise a Deacetylase sirtuin-type domain in the interval 1–237 (MSLPYRHVVI…PRLVEEILAA (237 aa)). 13 to 32 (GAGISAESGIQTFRAQDGLW) serves as a coordination point for NAD(+). Y57 and R60 together coordinate substrate. 94–97 (QNID) provides a ligand contact to NAD(+). Residue H112 is the Proton acceptor of the active site. Zn(2+) contacts are provided by C120 and C139. NAD(+)-binding positions include 179–181 (GTS), 205–207 (NLE), and A223.

Belongs to the sirtuin family. Class III subfamily. Zn(2+) serves as cofactor.

Its subcellular location is the cytoplasm. It carries out the reaction N(6)-acetyl-L-lysyl-[protein] + NAD(+) + H2O = 2''-O-acetyl-ADP-D-ribose + nicotinamide + L-lysyl-[protein]. It catalyses the reaction N(6)-succinyl-L-lysyl-[protein] + NAD(+) + H2O = 2''-O-succinyl-ADP-D-ribose + nicotinamide + L-lysyl-[protein]. In terms of biological role, NAD-dependent lysine deacetylase and desuccinylase that specifically removes acetyl and succinyl groups on target proteins. Modulates the activities of several proteins which are inactive in their acylated form. This is NAD-dependent protein deacylase from Vibrio cholerae serotype O1 (strain ATCC 39315 / El Tor Inaba N16961).